The primary structure comprises 187 residues: Peroxisome assembly protein 22 (187 aa).

A helical membrane pass occupies residues 7-29 (NTFFGLAALGALGLGYSVYKSFI).

It belongs to the peroxin-22 family. Interacts with PEX4.

It localises to the peroxisome membrane. Functionally, involved in peroxisome biogenesis. This Komagataella pastoris (Yeast) protein is Peroxisome assembly protein 22 (PEX22).